The sequence spans 471 residues: Adenosylhomocysteinase (471 aa).

Residues T60, D135, and E196 each coordinate substrate. 197–199 is a binding site for NAD(+); the sequence is TTT. Residues K226 and D230 each contribute to the substrate site. NAD(+) is bound by residues N231, 260–265, E283, N318, 339–341, and N387; these read GYGDVG and IGH.

It belongs to the adenosylhomocysteinase family. The cofactor is NAD(+).

It is found in the cytoplasm. It catalyses the reaction S-adenosyl-L-homocysteine + H2O = L-homocysteine + adenosine. The protein operates within amino-acid biosynthesis; L-homocysteine biosynthesis; L-homocysteine from S-adenosyl-L-homocysteine: step 1/1. In terms of biological role, may play a key role in the regulation of the intracellular concentration of adenosylhomocysteine. This Chlorobaculum tepidum (strain ATCC 49652 / DSM 12025 / NBRC 103806 / TLS) (Chlorobium tepidum) protein is Adenosylhomocysteinase.